Consider the following 266-residue polypeptide: Tryptophan synthase alpha chain (266 aa).

Active-site proton acceptor residues include Glu49 and Asp60.

It belongs to the TrpA family. As to quaternary structure, tetramer of two alpha and two beta chains.

The enzyme catalyses (1S,2R)-1-C-(indol-3-yl)glycerol 3-phosphate + L-serine = D-glyceraldehyde 3-phosphate + L-tryptophan + H2O. The protein operates within amino-acid biosynthesis; L-tryptophan biosynthesis; L-tryptophan from chorismate: step 5/5. In terms of biological role, the alpha subunit is responsible for the aldol cleavage of indoleglycerol phosphate to indole and glyceraldehyde 3-phosphate. This chain is Tryptophan synthase alpha chain, found in Opitutus terrae (strain DSM 11246 / JCM 15787 / PB90-1).